We begin with the raw amino-acid sequence, 211 residues long: FMN-dependent NADH:quinone oxidoreductase 2 (211 aa).

17–19 (SYS) is an FMN binding site.

Belongs to the azoreductase type 1 family. Homodimer. Requires FMN as cofactor.

It catalyses the reaction 2 a quinone + NADH + H(+) = 2 a 1,4-benzosemiquinone + NAD(+). The catalysed reaction is N,N-dimethyl-1,4-phenylenediamine + anthranilate + 2 NAD(+) = 2-(4-dimethylaminophenyl)diazenylbenzoate + 2 NADH + 2 H(+). In terms of biological role, quinone reductase that provides resistance to thiol-specific stress caused by electrophilic quinones. Also exhibits azoreductase activity. Catalyzes the reductive cleavage of the azo bond in aromatic azo compounds to the corresponding amines. This is FMN-dependent NADH:quinone oxidoreductase 2 from Bacillus licheniformis (strain ATCC 14580 / DSM 13 / JCM 2505 / CCUG 7422 / NBRC 12200 / NCIMB 9375 / NCTC 10341 / NRRL NRS-1264 / Gibson 46).